The following is a 391-amino-acid chain: Ferrochelatase (391 aa).

Fe cation is bound by residues histidine 196 and glutamate 281.

Belongs to the ferrochelatase family.

It localises to the cytoplasm. The enzyme catalyses heme b + 2 H(+) = protoporphyrin IX + Fe(2+). It functions in the pathway porphyrin-containing compound metabolism; protoheme biosynthesis; protoheme from protoporphyrin-IX: step 1/1. In terms of biological role, catalyzes the ferrous insertion into protoporphyrin IX. The chain is Ferrochelatase from Prochlorococcus marinus (strain MIT 9515).